The primary structure comprises 160 residues: Transcription elongation factor GreA (160 aa).

A coiled-coil region spans residues 1-72; it reads MAEKTYPMTL…QISSLETKIR (72 aa).

Belongs to the GreA/GreB family.

Necessary for efficient RNA polymerase transcription elongation past template-encoded arresting sites. The arresting sites in DNA have the property of trapping a certain fraction of elongating RNA polymerases that pass through, resulting in locked ternary complexes. Cleavage of the nascent transcript by cleavage factors such as GreA or GreB allows the resumption of elongation from the new 3'terminus. GreA releases sequences of 2 to 3 nucleotides. This Streptococcus pneumoniae (strain Hungary19A-6) protein is Transcription elongation factor GreA.